The following is a 40-amino-acid chain: uncharacterized protein (40 aa).

The chain crosses the membrane as a helical span at residues 20-37 (TYLYWTAVTAAYLTYLTI).

It is found in the membrane. This is an uncharacterized protein from Archaeoglobus fulgidus (strain ATCC 49558 / DSM 4304 / JCM 9628 / NBRC 100126 / VC-16).